The following is a 266-amino-acid chain: Small ribosomal subunit protein uS3 (266 aa).

The KH type-2 domain occupies 39 to 107; the sequence is VREYLKKKLK…PVHVNIEEIR (69 aa). Residues 218-266 are disordered; the sequence is EVAEDKRPRRNARPGDRRPRRDGEGGAPGARRGAPRRGAGKPEDGKTGE. Composition is skewed to basic and acidic residues over residues 230–241 and 257–266; these read RPGDRRPRRDGE and GKPEDGKTGE.

Belongs to the universal ribosomal protein uS3 family. In terms of assembly, part of the 30S ribosomal subunit. Forms a tight complex with proteins S10 and S14.

Functionally, binds the lower part of the 30S subunit head. Binds mRNA in the 70S ribosome, positioning it for translation. The polypeptide is Small ribosomal subunit protein uS3 (Burkholderia multivorans (strain ATCC 17616 / 249)).